The sequence spans 222 residues: Putative serine proteinase inhibitor 2 homolog second part (222 aa).

Belongs to the serpin family. Poxviruses subfamily.

This chain is Putative serine proteinase inhibitor 2 homolog second part, found in Homo sapiens (Human).